The chain runs to 189 residues: dCTP deaminase (189 aa).

DCTP-binding positions include 112–117, 136–138, Gln157, Tyr171, and Gln181; these read KSTYAR and TLE. Residue Glu138 is the Proton donor/acceptor of the active site.

This sequence belongs to the dCTP deaminase family. In terms of assembly, homotrimer.

It catalyses the reaction dCTP + H2O + H(+) = dUTP + NH4(+). It participates in pyrimidine metabolism; dUMP biosynthesis; dUMP from dCTP (dUTP route): step 1/2. In terms of biological role, catalyzes the deamination of dCTP to dUTP. This chain is dCTP deaminase, found in Alcanivorax borkumensis (strain ATCC 700651 / DSM 11573 / NCIMB 13689 / SK2).